Consider the following 392-residue polypeptide: Zinc finger protein ham-2 (392 aa).

2 consecutive C2H2-type zinc fingers follow at residues 16-39 (FPCS…MQAH) and 43-66 (YTCT…YRVH). Residues 72–95 (FMCRCCNWAFPDKTSLHIHMQSML) form a C2H2-type 3; degenerate zinc finger. 2 disordered regions span residues 106 to 130 (LAKS…PFSP) and 278 to 303 (HISH…HSGE). Residues 112–123 (VVDSTSESGSPR) show a composition bias toward polar residues. Low complexity predominate over residues 289 to 303 (SDSHISGGSSSHSGE).

It localises to the nucleus. In terms of biological role, probable transcription factor that acts downstream of egl-15, to promote migration of the HSN motor neurons from the tail to the gonad primordium during HSN cell differentiation. In Caenorhabditis elegans, this protein is Zinc finger protein ham-2.